Reading from the N-terminus, the 317-residue chain is tRNA dimethylallyltransferase (317 aa).

16–23 lines the ATP pocket; that stretch reads GPTASGKS. 18 to 23 contacts substrate; it reads TASGKS. Interaction with substrate tRNA regions lie at residues 41–44, 165–169, and 247–252; these read DSAQ, QRIQR, and RCVGYR.

This sequence belongs to the IPP transferase family. As to quaternary structure, monomer. Requires Mg(2+) as cofactor.

The catalysed reaction is adenosine(37) in tRNA + dimethylallyl diphosphate = N(6)-dimethylallyladenosine(37) in tRNA + diphosphate. Catalyzes the transfer of a dimethylallyl group onto the adenine at position 37 in tRNAs that read codons beginning with uridine, leading to the formation of N6-(dimethylallyl)adenosine (i(6)A). In Nitrosomonas eutropha (strain DSM 101675 / C91 / Nm57), this protein is tRNA dimethylallyltransferase.